We begin with the raw amino-acid sequence, 241 residues long: Peptidoglycan endopeptidase RipB (241 aa).

An N-terminal signal peptide occupies residues 1–31 (MRHTRFHPIKLAWITAVVAGLMVGVATPADA). The NlpC/P60 domain maps to 109–241 (RQAVEYVIRR…TPFVTRIIEY (133 aa)). Cysteine 152 functions as the Nucleophile in the catalytic mechanism. Histidine 201 serves as the catalytic Proton acceptor. The active site involves glutamate 213.

The protein belongs to the peptidase C40 family. In terms of assembly, monomer.

Functionally, peptidoglycan endopeptidase that cleaves the bond between D-glutamate and meso-diaminopimelate. Binds high-molecular weight peptidoglycan, but does not degrade it. Required for normal separation of daughter cells after cell division and cell wall integrity. Required for host cell invasion. The sequence is that of Peptidoglycan endopeptidase RipB (ripB) from Mycobacterium tuberculosis (strain CDC 1551 / Oshkosh).